Here is a 463-residue protein sequence, read N- to C-terminus: Hexokinase-7 (463 aa).

Positions 7–456 (AAAEQVVAAL…SGLGAALIAA (450 aa)) constitute a Hexokinase domain. A hexokinase small subdomain region spans residues 62 to 199 (NGTEEGLFYA…GLDMRVSALI (138 aa)). The ADP site is built by G76, T77, and N78. 4 residues coordinate D-glucose: T165, K166, N200, and D201. The tract at residues 200–445 (NDTVGTLAAG…KSVAVKLAND (246 aa)) is hexokinase large subdomain. Residue T224 coordinates ADP. D-glucose-binding residues include N227, E255, and E286. G410 lines the ADP pocket.

The protein belongs to the hexokinase family. In terms of tissue distribution, expressed in roots, leaves, flowers, immature seeds and seed coat.

The protein localises to the cytoplasm. The enzyme catalyses a D-hexose + ATP = a D-hexose 6-phosphate + ADP + H(+). It catalyses the reaction D-fructose + ATP = D-fructose 6-phosphate + ADP + H(+). It carries out the reaction D-glucose + ATP = D-glucose 6-phosphate + ADP + H(+). It participates in carbohydrate metabolism; hexose metabolism. Its pathway is carbohydrate degradation; glycolysis; D-glyceraldehyde 3-phosphate and glycerone phosphate from D-glucose: step 1/4. Functionally, fructose and glucose phosphorylating enzyme. Functions in sugar signaling via a glycolysis-dependent manner under aerobic conditions, but its signaling role is suppressed when oxygen is deficient. This chain is Hexokinase-7 (HXK7), found in Oryza sativa subsp. japonica (Rice).